The sequence spans 186 residues: Ribosome-recycling factor (186 aa).

This sequence belongs to the RRF family.

The protein localises to the cytoplasm. Its function is as follows. Responsible for the release of ribosomes from messenger RNA at the termination of protein biosynthesis. May increase the efficiency of translation by recycling ribosomes from one round of translation to another. This chain is Ribosome-recycling factor, found in Bartonella tribocorum (strain CIP 105476 / IBS 506).